A 432-amino-acid polypeptide reads, in one-letter code: Glutamyl-tRNA reductase (432 aa).

Substrate is bound by residues 49-52 (TCNR), Ser101, 106-108 (EPQ), and Gln112. The active-site Nucleophile is the Cys50. 181 to 186 (GAGETI) contributes to the NADP(+) binding site. The interval 407–432 (FPEKPGYQHPPIATPIVRTDDADPAP) is disordered.

It belongs to the glutamyl-tRNA reductase family. In terms of assembly, homodimer.

It catalyses the reaction (S)-4-amino-5-oxopentanoate + tRNA(Glu) + NADP(+) = L-glutamyl-tRNA(Glu) + NADPH + H(+). It participates in porphyrin-containing compound metabolism; protoporphyrin-IX biosynthesis; 5-aminolevulinate from L-glutamyl-tRNA(Glu): step 1/2. Catalyzes the NADPH-dependent reduction of glutamyl-tRNA(Glu) to glutamate 1-semialdehyde (GSA). This is Glutamyl-tRNA reductase from Xanthomonas oryzae pv. oryzae (strain PXO99A).